The primary structure comprises 750 residues: Photosystem I P700 chlorophyll a apoprotein A1 (750 aa).

8 helical membrane passes run 70 to 93 (VFSA…FHGA), 156 to 179 (LYCT…FHYH), 195 to 219 (LNHH…HVSL), 291 to 309 (IAHH…GHMY), 346 to 369 (WHAQ…HHMY), 385 to 411 (LSLF…IFMV), 433 to 455 (AIIS…LYIH), and 531 to 549 (FLVH…LILL). 2 residues coordinate [4Fe-4S] cluster: Cys-573 and Cys-582. 2 consecutive transmembrane segments (helical) span residues 589-610 (HVFL…HFSW) and 664-686 (LSAY…MFLF). His-675 contacts chlorophyll a'. Residues Met-683 and Tyr-691 each contribute to the chlorophyll a site. Position 692 (Trp-692) interacts with phylloquinone. The helical transmembrane segment at 724-744 (AVGVTHYLLGGIATTWAFFLA) threads the bilayer.

This sequence belongs to the PsaA/PsaB family. In terms of assembly, the PsaA/B heterodimer binds the P700 chlorophyll special pair and subsequent electron acceptors. PSI consists of a core antenna complex that captures photons, and an electron transfer chain that converts photonic excitation into a charge separation. The eukaryotic PSI reaction center is composed of at least 11 subunits. P700 is a chlorophyll a/chlorophyll a' dimer, A0 is one or more chlorophyll a, A1 is one or both phylloquinones and FX is a shared 4Fe-4S iron-sulfur center. serves as cofactor.

It is found in the plastid. It localises to the chloroplast thylakoid membrane. The enzyme catalyses reduced [plastocyanin] + hnu + oxidized [2Fe-2S]-[ferredoxin] = oxidized [plastocyanin] + reduced [2Fe-2S]-[ferredoxin]. Its function is as follows. PsaA and PsaB bind P700, the primary electron donor of photosystem I (PSI), as well as the electron acceptors A0, A1 and FX. PSI is a plastocyanin-ferredoxin oxidoreductase, converting photonic excitation into a charge separation, which transfers an electron from the donor P700 chlorophyll pair to the spectroscopically characterized acceptors A0, A1, FX, FA and FB in turn. Oxidized P700 is reduced on the lumenal side of the thylakoid membrane by plastocyanin. This is Photosystem I P700 chlorophyll a apoprotein A1 from Amborella trichopoda.